The sequence spans 54 residues: Large ribosomal subunit protein bL33C (54 aa).

It belongs to the bacterial ribosomal protein bL33 family.

This is Large ribosomal subunit protein bL33C from Streptomyces griseus subsp. griseus (strain JCM 4626 / CBS 651.72 / NBRC 13350 / KCC S-0626 / ISP 5235).